The primary structure comprises 579 residues: MEFPRKRRGRDSQPLQSEFMTDTTVESLPQNPFASLLSTRTGVSAPSGIREAHSQMEKRRRDKMNHLIQKLSSMIPPHIPTAHKLDKLSVLRRAVQYLRSLRGMTELYLGENSKPSFIQDKELSHLILKAAEGFLFVVGCERGRIFYVSKSVSKTLRYDQASLIGQNLFDFLHPKDVAKVKEQLSCDGSPREKPIDTKTSQVYSHPYTGRPRMHSGSRRSFFFRMKSCTVPVKEEQPCSSCSKKKDHRKFHTVHCTGYLRSWPLNVVGMEKESGGGKDSGPLTCLVAMGRLHPYIVPQKSGKINVRPAEFITRFAMNGKFVYVDQRATAILGYLPQELLGTSCYEYFHQDDHSSLTDKHKAVLQSKEKILTDSYKFRVKDGAFVTLKSEWFSFTNPWTKELEYIVSVNTLVLGRSETRLSLLHCGGSSQSSEDSFRQSCINVPGVSTGTVLGAGSIGTDIANEVLSLQRLHSSSPEDASPSEEVRDDCSVNGGNAYGPASTREPFAVSPSETEVLEAARQHQSTEPAHPHGPLPGDSAQLGFDVLCDSDSIDMAAFMNYLEAEGGLGDPGDFSDIQWAL.

An interaction with PER2 region spans residues 1–198 (MEFPRKRRGR…SPREKPIDTK (198 aa)). The short motif at 4–9 (PRKRRG) is the Nuclear localization signal element. The segment at 40 to 61 (RTGVSAPSGIREAHSQMEKRRR) is disordered. The bHLH domain occupies 48–101 (GIREAHSQMEKRRRDKMNHLIQKLSSMIPPHIPTAHKLDKLSVLRRAVQYLRSL). Over residues 50 to 59 (REAHSQMEKR) the composition is skewed to basic and acidic residues. Residues 118 to 128 (IQDKELSHLIL) carry the Nuclear export signal 1 motif. Residues 119–190 (QDKELSHLIL…KEQLSCDGSP (72 aa)) enclose the PAS 1 domain. The segment covering 186-196 (CDGSPREKPID) has biased composition (basic and acidic residues). Residues 186–213 (CDGSPREKPIDTKTSQVYSHPYTGRPRM) are disordered. A Glycyl lysine isopeptide (Lys-Gly) (interchain with G-Cter in SUMO2 and SUMO3) cross-link involves residue Lys-226. Lys-233 is covalently cross-linked (Glycyl lysine isopeptide (Lys-Gly) (interchain with G-Cter in SUMO2)). The region spanning 296 to 366 (VPQKSGKINV…DKHKAVLQSK (71 aa)) is the PAS 2 domain. The short motif at 331–339 (LGYLPQELL) is the Nuclear export signal 2 element. In terms of domain architecture, PAC spans 371–414 (TDSYKFRVKDGAFVTLKSEWFSFTNPWTKELEYIVSVNTLVLGR). Residues 469–536 (RLHSSSPEDA…AHPHGPLPGD (68 aa)) are disordered.

In terms of assembly, component of the circadian core oscillator, which includes the CRY proteins, CLOCK, or NPAS2, BMAL1 or BMAL2, CSNK1D and/or CSNK1E, TIMELESS and the PER proteins. Interacts directly with CLOCK to form the BMAL2-CLOCK transactivator. Can form heterodimers or homodimers which interact directly with CLOCK to form the transcription activator. Interacts with NPAS2 and HIF1A. Interacts with PER2. As to expression, expressed in the suprachiasmatic nucleus (SCN).

Its subcellular location is the nucleus. In terms of biological role, transcriptional activator which forms a core component of the circadian clock. The circadian clock, an internal time-keeping system, regulates various physiological processes through the generation of approximately 24 hour circadian rhythms in gene expression, which are translated into rhythms in metabolism and behavior. It is derived from the Latin roots 'circa' (about) and 'diem' (day) and acts as an important regulator of a wide array of physiological functions including metabolism, sleep, body temperature, blood pressure, endocrine, immune, cardiovascular, and renal function. Consists of two major components: the central clock, residing in the suprachiasmatic nucleus (SCN) of the brain, and the peripheral clocks that are present in nearly every tissue and organ system. Both the central and peripheral clocks can be reset by environmental cues, also known as Zeitgebers (German for 'timegivers'). The predominant Zeitgeber for the central clock is light, which is sensed by retina and signals directly to the SCN. The central clock entrains the peripheral clocks through neuronal and hormonal signals, body temperature and feeding-related cues, aligning all clocks with the external light/dark cycle. Circadian rhythms allow an organism to achieve temporal homeostasis with its environment at the molecular level by regulating gene expression to create a peak of protein expression once every 24 hours to control when a particular physiological process is most active with respect to the solar day. Transcription and translation of core clock components (CLOCK, NPAS2, BMAL1, BMAL2, PER1, PER2, PER3, CRY1 and CRY2) plays a critical role in rhythm generation, whereas delays imposed by post-translational modifications (PTMs) are important for determining the period (tau) of the rhythms (tau refers to the period of a rhythm and is the length, in time, of one complete cycle). A diurnal rhythm is synchronized with the day/night cycle, while the ultradian and infradian rhythms have a period shorter and longer than 24 hours, respectively. Disruptions in the circadian rhythms contribute to the pathology of cardiovascular diseases, cancer, metabolic syndromes and aging. A transcription/translation feedback loop (TTFL) forms the core of the molecular circadian clock mechanism. Transcription factors, CLOCK or NPAS2 and BMAL1 or BMAL2, form the positive limb of the feedback loop, act in the form of a heterodimer and activate the transcription of core clock genes and clock-controlled genes (involved in key metabolic processes), harboring E-box elements (5'-CACGTG-3') within their promoters. The core clock genes: PER1/2/3 and CRY1/2 which are transcriptional repressors form the negative limb of the feedback loop and interact with the CLOCK|NPAS2-BMAL1|BMAL2 heterodimer inhibiting its activity and thereby negatively regulating their own expression. This heterodimer also activates nuclear receptors NR1D1/2 and RORA/B/G, which form a second feedback loop and which activate and repress BMAL1 transcription, respectively. The CLOCK-BMAL2 heterodimer activates the transcription of SERPINE1/PAI1 and BHLHE40/DEC1. The protein is Basic helix-loop-helix ARNT-like protein 2 (Bmal2) of Mus musculus (Mouse).